The sequence spans 776 residues: Homoaconitase, mitochondrial (776 aa).

The N-terminal 24 residues, Met1–Thr24, are a transit peptide targeting the mitochondrion. Positions 392, 459, and 462 each coordinate [4Fe-4S] cluster.

The protein belongs to the aconitase/IPM isomerase family. Requires [4Fe-4S] cluster as cofactor.

The protein localises to the mitochondrion. The catalysed reaction is (2R,3S)-homoisocitrate = cis-homoaconitate + H2O. The protein operates within amino-acid biosynthesis; L-lysine biosynthesis via AAA pathway; L-alpha-aminoadipate from 2-oxoglutarate: step 3/5. Functionally, catalyzes the reversible hydration of cis-homoaconitate to (2R,3S)-homoisocitrate, a step in the alpha-aminoadipate pathway for lysine biosynthesis. This chain is Homoaconitase, mitochondrial (LYS4), found in Gibberella zeae (strain ATCC MYA-4620 / CBS 123657 / FGSC 9075 / NRRL 31084 / PH-1) (Wheat head blight fungus).